We begin with the raw amino-acid sequence, 295 residues long: 4-diphosphocytidyl-2-C-methyl-D-erythritol kinase (295 aa).

Lys-22 is a catalytic residue. Residue 106–116 (PAGGGFGGGSS) participates in ATP binding. The active site involves Asp-148.

It belongs to the GHMP kinase family. IspE subfamily.

It catalyses the reaction 4-CDP-2-C-methyl-D-erythritol + ATP = 4-CDP-2-C-methyl-D-erythritol 2-phosphate + ADP + H(+). The protein operates within isoprenoid biosynthesis; isopentenyl diphosphate biosynthesis via DXP pathway; isopentenyl diphosphate from 1-deoxy-D-xylulose 5-phosphate: step 3/6. In terms of biological role, catalyzes the phosphorylation of the position 2 hydroxy group of 4-diphosphocytidyl-2C-methyl-D-erythritol. The sequence is that of 4-diphosphocytidyl-2-C-methyl-D-erythritol kinase from Xanthomonas euvesicatoria pv. vesicatoria (strain 85-10) (Xanthomonas campestris pv. vesicatoria).